We begin with the raw amino-acid sequence, 113 residues long: UPF0102 protein Dgeo_1894 (113 aa).

Belongs to the UPF0102 family.

This is UPF0102 protein Dgeo_1894 from Deinococcus geothermalis (strain DSM 11300 / CIP 105573 / AG-3a).